A 612-amino-acid polypeptide reads, in one-letter code: Sorting nexin MVP1 (612 aa).

Residues serine 35–glycine 68 are disordered. The PX domain occupies tryptophan 226–glutamate 334. A 1,2-diacyl-sn-glycero-3-phospho-(1D-myo-inositol-3-phosphate) contacts are provided by arginine 263, serine 265, lysine 289, and arginine 301.

The protein belongs to the sorting nexin family.

It localises to the cytoplasm. Its subcellular location is the membrane. Required for vacuolar protein sorting. In Cryptococcus neoformans var. neoformans serotype D (strain B-3501A) (Filobasidiella neoformans), this protein is Sorting nexin MVP1 (MVP1).